The chain runs to 172 residues: 3-hydroxydecanoyl-[acyl-carrier-protein] dehydratase (172 aa).

Residue His71 is part of the active site.

It belongs to the thioester dehydratase family. FabA subfamily. In terms of assembly, homodimer.

It is found in the cytoplasm. It carries out the reaction a (3R)-hydroxyacyl-[ACP] = a (2E)-enoyl-[ACP] + H2O. It catalyses the reaction (3R)-hydroxydecanoyl-[ACP] = (2E)-decenoyl-[ACP] + H2O. The enzyme catalyses (2E)-decenoyl-[ACP] = (3Z)-decenoyl-[ACP]. It functions in the pathway lipid metabolism; fatty acid biosynthesis. Its function is as follows. Necessary for the introduction of cis unsaturation into fatty acids. Catalyzes the dehydration of (3R)-3-hydroxydecanoyl-ACP to E-(2)-decenoyl-ACP and then its isomerization to Z-(3)-decenoyl-ACP. Can catalyze the dehydratase reaction for beta-hydroxyacyl-ACPs with saturated chain lengths up to 16:0, being most active on intermediate chain length. The sequence is that of 3-hydroxydecanoyl-[acyl-carrier-protein] dehydratase from Escherichia coli (strain SE11).